We begin with the raw amino-acid sequence, 206 residues long: Large ribosomal subunit protein uL4 (206 aa).

A disordered region spans residues 46–89 (GNRAQKTRAEVKHSTKKPWRQKGTGRARSGMTSSPLWRKGGRAF). Over residues 59-70 (STKKPWRQKGTG) the composition is skewed to basic residues.

This sequence belongs to the universal ribosomal protein uL4 family. Part of the 50S ribosomal subunit.

One of the primary rRNA binding proteins, this protein initially binds near the 5'-end of the 23S rRNA. It is important during the early stages of 50S assembly. It makes multiple contacts with different domains of the 23S rRNA in the assembled 50S subunit and ribosome. Its function is as follows. Forms part of the polypeptide exit tunnel. The protein is Large ribosomal subunit protein uL4 of Neisseria gonorrhoeae (strain NCCP11945).